Consider the following 497-residue polypeptide: Probable cytosol aminopeptidase (497 aa).

Mn(2+) contacts are provided by Lys-268 and Asp-273. The active site involves Lys-280. The Mn(2+) site is built by Asp-291, Asp-350, and Glu-352. Residue Arg-354 is part of the active site.

The protein belongs to the peptidase M17 family. Requires Mn(2+) as cofactor.

Its subcellular location is the cytoplasm. The catalysed reaction is Release of an N-terminal amino acid, Xaa-|-Yaa-, in which Xaa is preferably Leu, but may be other amino acids including Pro although not Arg or Lys, and Yaa may be Pro. Amino acid amides and methyl esters are also readily hydrolyzed, but rates on arylamides are exceedingly low.. It catalyses the reaction Release of an N-terminal amino acid, preferentially leucine, but not glutamic or aspartic acids.. Functionally, presumably involved in the processing and regular turnover of intracellular proteins. Catalyzes the removal of unsubstituted N-terminal amino acids from various peptides. The sequence is that of Probable cytosol aminopeptidase from Alkalilimnicola ehrlichii (strain ATCC BAA-1101 / DSM 17681 / MLHE-1).